The chain runs to 217 residues: 3,4-dihydroxy-2-butanone 4-phosphate synthase (217 aa).

Residues 37 to 38 (RE), Asp42, 150 to 154 (RGGHT), and Glu174 contribute to the D-ribulose 5-phosphate site. Glu38 lines the Mg(2+) pocket. A Mg(2+)-binding site is contributed by His153.

This sequence belongs to the DHBP synthase family. In terms of assembly, homodimer. Mg(2+) is required as a cofactor. It depends on Mn(2+) as a cofactor.

It carries out the reaction D-ribulose 5-phosphate = (2S)-2-hydroxy-3-oxobutyl phosphate + formate + H(+). It participates in cofactor biosynthesis; riboflavin biosynthesis; 2-hydroxy-3-oxobutyl phosphate from D-ribulose 5-phosphate: step 1/1. In terms of biological role, catalyzes the conversion of D-ribulose 5-phosphate to formate and 3,4-dihydroxy-2-butanone 4-phosphate. The sequence is that of 3,4-dihydroxy-2-butanone 4-phosphate synthase from Escherichia coli O17:K52:H18 (strain UMN026 / ExPEC).